The following is a 92-amino-acid chain: Sec-independent protein translocase protein TatA (92 aa).

A helical membrane pass occupies residues 2–22; the sequence is IPANFGGTELIILLVIILLLF. Residues 43-92 are disordered; sequence KGTSGAYEELEEKKGEEEKDEGGKKEAEASGRGEEEQQARAAGEAGRKQG. Residues 53-80 are compositionally biased toward basic and acidic residues; it reads EEKKGEEEKDEGGKKEAEASGRGEEEQQ.

This sequence belongs to the TatA/E family. The Tat system comprises two distinct complexes: a TatABC complex, containing multiple copies of TatA, TatB and TatC subunits, and a separate TatA complex, containing only TatA subunits. Substrates initially bind to the TatABC complex, which probably triggers association of the separate TatA complex to form the active translocon.

It localises to the cell membrane. Its function is as follows. Part of the twin-arginine translocation (Tat) system that transports large folded proteins containing a characteristic twin-arginine motif in their signal peptide across membranes. TatA could form the protein-conducting channel of the Tat system. This Rubrobacter xylanophilus (strain DSM 9941 / JCM 11954 / NBRC 16129 / PRD-1) protein is Sec-independent protein translocase protein TatA.